Here is a 219-residue protein sequence, read N- to C-terminus: Thiamine-phosphate synthase (219 aa).

Residues 44–48 (QFREK) and Asn-79 each bind 4-amino-2-methyl-5-(diphosphooxymethyl)pyrimidine. Asp-80 and Asp-99 together coordinate Mg(2+). Ser-117 provides a ligand contact to 4-amino-2-methyl-5-(diphosphooxymethyl)pyrimidine. 143-145 (TST) provides a ligand contact to 2-[(2R,5Z)-2-carboxy-4-methylthiazol-5(2H)-ylidene]ethyl phosphate. A 4-amino-2-methyl-5-(diphosphooxymethyl)pyrimidine-binding site is contributed by Lys-146. 2-[(2R,5Z)-2-carboxy-4-methylthiazol-5(2H)-ylidene]ethyl phosphate is bound by residues Gly-175 and 195 to 196 (IS).

Belongs to the thiamine-phosphate synthase family. The cofactor is Mg(2+).

It carries out the reaction 2-[(2R,5Z)-2-carboxy-4-methylthiazol-5(2H)-ylidene]ethyl phosphate + 4-amino-2-methyl-5-(diphosphooxymethyl)pyrimidine + 2 H(+) = thiamine phosphate + CO2 + diphosphate. The catalysed reaction is 2-(2-carboxy-4-methylthiazol-5-yl)ethyl phosphate + 4-amino-2-methyl-5-(diphosphooxymethyl)pyrimidine + 2 H(+) = thiamine phosphate + CO2 + diphosphate. It catalyses the reaction 4-methyl-5-(2-phosphooxyethyl)-thiazole + 4-amino-2-methyl-5-(diphosphooxymethyl)pyrimidine + H(+) = thiamine phosphate + diphosphate. The protein operates within cofactor biosynthesis; thiamine diphosphate biosynthesis; thiamine phosphate from 4-amino-2-methyl-5-diphosphomethylpyrimidine and 4-methyl-5-(2-phosphoethyl)-thiazole: step 1/1. Condenses 4-methyl-5-(beta-hydroxyethyl)thiazole monophosphate (THZ-P) and 2-methyl-4-amino-5-hydroxymethyl pyrimidine pyrophosphate (HMP-PP) to form thiamine monophosphate (TMP). In Bacillus thuringiensis (strain Al Hakam), this protein is Thiamine-phosphate synthase.